The primary structure comprises 233 residues: MGKHTKFGSSDDEGETETSVAKRQKDEKKEKKKEKRDRSRSPHKERERSPKRDRHPEKNESRRHDDRDQERRRDYGRNDRRDDRRGDGSWKTDRNDRNDRRNDFQRRDDKNRLSAEEIAAQRKALWGNKKVAGESSSSNTTDTASSSSEPATGGKNEKLWSSAIAATGVDSSKANKFMRLMGVKNAPKPTDDSSRLSDEKNRQDKMLNDLEKQYAIARETTHMGRGTGFGFGH.

Disordered regions lie at residues 1–159 and 181–206; these read MGKH…NEKL and MGVK…QDKM. Over residues 36 to 115 the composition is skewed to basic and acidic residues; it reads RDRSRSPHKE…RRDDKNRLSA (80 aa). Residues 135-148 show a composition bias toward low complexity; the sequence is SSSSNTTDTASSSS. Residues 189 to 206 are compositionally biased toward basic and acidic residues; it reads PTDDSSRLSDEKNRQDKM.

This is an uncharacterized protein from Caenorhabditis elegans.